The primary structure comprises 287 residues: Small ribosomal subunit protein uS2 (287 aa).

The interval 233-287 (HKAPQDDIEPMAEWEKQLLQSGDSSGETRPISGTDRPLDGDLSKGPAPQDEELSD) is disordered. The span at 250-259 (LLQSGDSSGE) shows a compositional bias: polar residues.

Belongs to the universal ribosomal protein uS2 family.

The chain is Small ribosomal subunit protein uS2 from Tropheryma whipplei (strain TW08/27) (Whipple's bacillus).